We begin with the raw amino-acid sequence, 205 residues long: Cerebellin-3 (205 aa).

The signal sequence occupies residues 1-32 (MLGTKRHWPPGPSLSLELPLALTLLALRAGWA). The C1q domain maps to 67–205 (APPGRVAFAA…SFSGFLIFPL (139 aa)). Asn90 carries an N-linked (GlcNAc...) asparagine glycan.

Heterohexamer; disulfide-linked heterotrimers. Interacts with CBLN1. May also form oligomers with CBLN2 and CBLN4.

The protein resides in the endoplasmic reticulum. It localises to the golgi apparatus. Its subcellular location is the cis-Golgi network. The protein localises to the secreted. It is found in the synapse. Its function is as follows. May be involved in synaptic functions in the CNS. The chain is Cerebellin-3 (CBLN3) from Bos taurus (Bovine).